The chain runs to 1062 residues: Roc-COR-CHAT protease (1062 aa).

LRR repeat units lie at residues 70 to 94 (LAGL…HLQQ), 95 to 116 (LRLL…GSMP), 115 to 141 (MPLL…ALQK), 142 to 159 (LDVS…SACP), 160 to 180 (ALWW…MPAG), 181 to 203 (FKAL…NGKL), 204 to 226 (PKLV…LLLP), and 228 to 249 (GLET…IRGS). Residues 470 to 660 (DWLGVMEELQ…GLMWKDNVVF (191 aa)) enclose the COR domain. The disordered stretch occupies residues 836–856 (ERDNDHTGLSDSSDQEDETFT). Active-site residues include histidine 931 and cysteine 980.

Its function is as follows. A dedicated protease for substrate gasdermin bGSDM; cleaves the bGSDM precursor, releasing the pore-forming moiety, which integrates into the membrane and triggers cell death. Probably involved in defense against bacteriophages. Expression of bGSDM and this neighboring protease is highly toxic in E.coli. The chain is Roc-COR-CHAT protease from Unknown prokaryotic organism.